A 1235-amino-acid chain; its full sequence is MSFFNFRKIFKLGSEKKKKQYEHVKRDLNPEDFWEIIGELGDGAFGKVYKAQNKETSVLAAAKVIDTKSEEELEDYMVEIDILASCDHPNIVKLLDAFYYENNLWILIEFCAGGAVDAVMLELERPLTESQIQVVCKQTLDALNYLHDNKIIHRDLKAGNILFTLDGDIKLADFGVSAKNTRTIQRRDSFIGTPYWMAPEVVMCETSKDRPYDYKADVWSLGITLIEMAEIEPPHHELNPMRVLLKIAKSEPPTLAQPSRWSSNFKDFLKKCLEKNVDARWTTSQLLQHPFVTVDSNKPIRELIAEAKAEVTEEVEDGKEEDEEEETENSLPIPASKRASSDLSIASSEEDKLSQNACILESVSEKTERSNSEDKLNSKILNEKPTTDEPEKAVEDINEHITDAQLEAMTELHDRTAVIKENEREKRPKLENLPDTEDQETVDINSVSEGKENNIMITLETNIEHNLKSEEEKDQEKQQMFENKLIKSEEIKDTILQTVDLVSQETGEKEANIQAVDSEVGLTKEDTQEKLGEDDKTQKDVISNTSDVIGTCEAADVAQKVDEDSAEDTQSNDGKEVVEVGQKLINKPMVGPEAGGTKEVPIKEIVEMNEIEEGKNKEQAINSSENIMDINEEPGTTEGEEITESSSTEEMEVRSVVADTDQKALGSEVQDASKVTTQIDKEKKEIPVSIKKEPEVTVVSQPTEPQPVLIPSININSDSGENKEEIGSLSKTETILPPESENPKENDNDSGTGSTADTSSIDLNLSISSFLSKTKDSGSISLQETRRQKKTLKKTRKFIVDGVEVSVTTSKIVTDSDSKTEELRFLRRQELRELRFLQKEEQRAQQQLNSKLQQQREQIFRRFEQEMMSKKRQYDQEIENLEKQQKQTIERLEQEHTNRLRDEAKRIKGEQEKELSKFQNMLKNRKKEVINEVEKAPKELRKELMKRRKEELAQSQHAQEQEFVQKQQQELDGSLKKIIQQQKAELANIERECLNNKQQLMRAREAAIWELEERHLQEKHQLLKQQLKDQYFMQRHQLLKRHEKETEQMQRYNQRLIEELKNRQTQERARLPKIQRSEAKTRMAMFKKSLRINSTATPDQDRDKIKQFAAQEEKRQKNERMAQHQKHENQMRDLQLQCEANVRELHQLQNEKCHLLVEHETQKLKELDEEHSQELKEWREKLRPRKKTLEEEFARKLQEQEVFFKMTGESECLNPSTQSRISKFYPIPSLHSTGS.

Ser-14 carries the post-translational modification Phosphoserine. Residues 34–292 (WEIIGELGDG…TSQLLQHPFV (259 aa)) enclose the Protein kinase domain. Residues 40–48 (LGDGAFGKV) and Lys-63 contribute to the ATP site. Residue Asp-155 is the Proton acceptor of the active site. Thr-183 carries the post-translational modification Phosphothreonine. Position 189 is a phosphoserine (Ser-189). A disordered region spans residues 309-351 (AEVTEEVEDGKEEDEEEETENSLPIPASKRASSDLSIASSEED). Positions 312–328 (TEEVEDGKEEDEEEETE) are enriched in acidic residues. Phosphoserine occurs at positions 330, 340, 341, 344, 347, 348, 354, and 372. Disordered stretches follow at residues 363 to 393 (VSEKTERSNSEDKLNSKILNEKPTTDEPEKA) and 421 to 441 (ENEREKRPKLENLPDTEDQET). Positions 421–432 (ENEREKRPKLEN) are enriched in basic and acidic residues. Position 518 is a phosphoserine (Ser-518). The disordered stretch occupies residues 519–539 (EVGLTKEDTQEKLGEDDKTQK). Residues 522–539 (LTKEDTQEKLGEDDKTQK) are compositionally biased toward basic and acidic residues. Ser-565 carries the phosphoserine modification. Residue Thr-569 is modified to Phosphothreonine. Ser-571, Ser-647, Ser-655, and Ser-667 each carry phosphoserine. The disordered stretch occupies residues 613-760 (EGKNKEQAIN…GTGSTADTSS (148 aa)). Positions 638–650 (EGEEITESSSTEE) are enriched in acidic residues. Positions 679 to 695 (IDKEKKEIPVSIKKEPE) are enriched in basic and acidic residues. Positions 749–760 (DSGTGSTADTSS) are enriched in low complexity. 2 positions are modified to phosphoserine: Ser-777 and Ser-779. The residue at position 814 (Thr-814) is a Phosphothreonine. Ser-818 is subject to Phosphoserine. Residues 826-1069 (LRRQELRELR…LKNRQTQERA (244 aa)) adopt a coiled-coil conformation. Positions 875–910 (DQEIENLEKQQKQTIERLEQEHTNRLRDEAKRIKGE) constitute a UVR domain. At Thr-1097 the chain carries Phosphothreonine. The stretch at 1109–1183 (AAQEEKRQKN…ELKEWREKLR (75 aa)) forms a coiled coil.

It belongs to the protein kinase superfamily. STE Ser/Thr protein kinase family. STE20 subfamily. Post-translationally, proteolytically cleaved by caspase-3. Autophosphorylated. In terms of tissue distribution, ubiquitously expressed. Highest expression is found in heart and in skeletal muscle.

It is found in the cytoplasm. The catalysed reaction is L-seryl-[protein] + ATP = O-phospho-L-seryl-[protein] + ADP + H(+). It carries out the reaction L-threonyl-[protein] + ATP = O-phospho-L-threonyl-[protein] + ADP + H(+). Its function is as follows. Mediates apoptosis and actin stress fiber dissolution. This Homo sapiens (Human) protein is STE20-like serine/threonine-protein kinase (SLK).